The primary structure comprises 292 residues: ATP phosphoribosyltransferase (292 aa).

It belongs to the ATP phosphoribosyltransferase family. Long subfamily. The cofactor is Mg(2+).

It is found in the cytoplasm. The enzyme catalyses 1-(5-phospho-beta-D-ribosyl)-ATP + diphosphate = 5-phospho-alpha-D-ribose 1-diphosphate + ATP. It functions in the pathway amino-acid biosynthesis; L-histidine biosynthesis; L-histidine from 5-phospho-alpha-D-ribose 1-diphosphate: step 1/9. With respect to regulation, feedback inhibited by histidine. Catalyzes the condensation of ATP and 5-phosphoribose 1-diphosphate to form N'-(5'-phosphoribosyl)-ATP (PR-ATP). Has a crucial role in the pathway because the rate of histidine biosynthesis seems to be controlled primarily by regulation of HisG enzymatic activity. This is ATP phosphoribosyltransferase from Thermodesulfovibrio yellowstonii (strain ATCC 51303 / DSM 11347 / YP87).